Here is a 246-residue protein sequence, read N- to C-terminus: Probable transcriptional regulatory protein AHA_1522 (246 aa).

Belongs to the TACO1 family.

The protein resides in the cytoplasm. In Aeromonas hydrophila subsp. hydrophila (strain ATCC 7966 / DSM 30187 / BCRC 13018 / CCUG 14551 / JCM 1027 / KCTC 2358 / NCIMB 9240 / NCTC 8049), this protein is Probable transcriptional regulatory protein AHA_1522.